The sequence spans 167 residues: Signal peptidase complex subunit 2 (167 aa).

At 1-36 (MPKYNVSDFKSKFDKELTNHFNKNGYKQSFVFEDIR) the chain is on the cytoplasmic side. Residues 37-57 (LLIAIACIIPAGLAFGIEYVY) form a helical membrane-spanning segment. Topologically, residues 58 to 68 (GFGVLKSYLKY) are lumenal. Residues 69–89 (LLPLYFLASCLLTFWSSVVKG) form a helical membrane-spanning segment. Residues 90–167 (STVYVATKKE…ISKYLSQIEN (78 aa)) lie on the Cytoplasmic side of the membrane.

It belongs to the SPCS2 family. In terms of assembly, component of the signal peptidase complex (SPC) composed of a catalytic subunit sec11 and three accessory subunits spc1, spc2 and spc3. The complex induces a local thinning of the ER membrane which is used to measure the length of the signal peptide (SP) h-region of protein substrates. This ensures the selectivity of the complex towards h-regions shorter than 18-20 amino acids. SPC associates with the translocon complex.

It is found in the endoplasmic reticulum membrane. Component of the signal peptidase complex (SPC) which catalyzes the cleavage of N-terminal signal sequences from nascent proteins as they are translocated into the lumen of the endoplasmic reticulum. Enhances the enzymatic activity of SPC and facilitates the interactions between different components of the translocation site. The protein is Signal peptidase complex subunit 2 (spc2) of Schizosaccharomyces pombe (strain 972 / ATCC 24843) (Fission yeast).